The following is a 704-amino-acid chain: Phytyl ester synthase 1, chloroplastic (704 aa).

The transit peptide at 1-27 (MATCSSSLLVLPNLRLSSNQRRNFKVR) directs the protein to the chloroplast.

It belongs to the diacylglycerol acyltransferase family. In terms of assembly, interacts with PGM48. In terms of tissue distribution, mostly expressed in flowers (e.g. sepals, petals and stamen).

It is found in the plastid. The protein localises to the chloroplast. Its subcellular location is the plastoglobule. The catalysed reaction is a 1,2-diacyl-3-O-(beta-D-galactosyl)-sn-glycerol + a 1,2-diacylglycerol = an acyl-3-O-(beta-D-galactosyl)-sn-glycerol + a triacylglycerol. It carries out the reaction a 1,2-diacylglycerol + a fatty acyl-CoA = a triacylglycerol + CoA. The enzyme catalyses a fatty acyl-[ACP] + a 1,2-diacylglycerol = a triacylglycerol + holo-[ACP]. It catalyses the reaction phytol + a fatty acyl-CoA = a fatty acid phytyl ester + CoA. The catalysed reaction is phytol + tetradecanoyl-CoA = tetradecanoate phytyl ester + CoA. It carries out the reaction a 1,3-diacylglycerol + a fatty acyl-CoA = a triacylglycerol + CoA. The enzyme catalyses 1,2-dihexanoylglycerol + tetradecanoyl-CoA = 1,2-dihexanoyl-3-tetradecanoylglycerol + CoA. It catalyses the reaction 1,2-dihexanoylglycerol + hexadecanoyl-CoA = 1,2-dihexanoyl-3-hexadecanoylglycerol + CoA. The catalysed reaction is 1,2-dihexanoylglycerol + octadecanoyl-CoA = 1,2-dihexanoyl-3-octadecanoylglycerol + CoA. It carries out the reaction (7Z,10Z,13Z)-hexadecatrienoyl-CoA + 1,2-dihexanoylglycerol = 1,2-dihexanoyl-3-(7Z,10Z,13Z-hexadecatrienoyl)-glycerol + CoA. The enzyme catalyses 1,2-dihexanoylglycerol + (9Z)-octadecenoyl-CoA = 1,2-dihexanoyl-3-(9Z-octadecenoyl)-glycerol + CoA. It catalyses the reaction 1,2-dihexanoylglycerol + (9Z,12Z,15Z)-octadecatrienoyl-CoA = 1,2-dihexanoyl-3-(9Z,12Z,15Z-octadecatrienoyl)-glycerol + CoA. The catalysed reaction is phytol + decanoyl-CoA = decanoate phytyl ester + CoA. It carries out the reaction (7Z,10Z,13Z)-hexadecatrienoyl-CoA + phytol = (7Z,10Z,13Z)-hexadecatrienoate phytyl ester + CoA. The enzyme catalyses phytol + dodecanoyl-CoA = dodecanoate phytyl ester + CoA. Acyltransferase involved in fatty acid phytyl ester synthesis in chloroplasts, a process required for the maintenance of the photosynthetic membrane integrity during abiotic stress and senescence. Exhibits phytyl ester synthesis and diacylglycerol acyltransferase activities with broad substrate specificities, and can employ acyl-CoAs, acyl carrier proteins, and galactolipids as acyl donors. This is Phytyl ester synthase 1, chloroplastic from Arabidopsis thaliana (Mouse-ear cress).